The chain runs to 603 residues: Granule-bound starch synthase 1, chloroplastic/amyloplastic (603 aa).

The N-terminal 75 residues, 1 to 75 (MATITGSSMP…SEKSLGKIVC (75 aa)), are a transit peptide targeting the chloroplast. Lysine 91 contacts ADP-alpha-D-glucose.

Belongs to the glycosyltransferase 1 family. Bacterial/plant glycogen synthase subfamily. As to expression, expressed in pods and leaves. No expression in flowers or stipules.

Its subcellular location is the plastid. The protein resides in the chloroplast. The protein localises to the amyloplast. It catalyses the reaction an NDP-alpha-D-glucose + [(1-&gt;4)-alpha-D-glucosyl](n) = [(1-&gt;4)-alpha-D-glucosyl](n+1) + a ribonucleoside 5'-diphosphate + H(+). It functions in the pathway glycan biosynthesis; starch biosynthesis. May be responsible for the synthesis of amylose. The polypeptide is Granule-bound starch synthase 1, chloroplastic/amyloplastic (Pisum sativum (Garden pea)).